Reading from the N-terminus, the 366-residue chain is Isopropyl malate dehydrogenase htyC (366 aa).

Position 71–73 (Val-71–Gly-73) interacts with NADP(+). Arg-91 and Arg-130 together coordinate substrate. The Mg(2+) site is built by Asp-221, Asp-246, and Asp-250. Gly-277–Ile-282 serves as a coordination point for NADP(+).

It belongs to the isocitrate and isopropylmalate dehydrogenases family. As to quaternary structure, homodimer. It depends on Mg(2+) as a cofactor. Mn(2+) serves as cofactor.

It catalyses the reaction (2R,3S)-3-isopropylmalate + NAD(+) = 4-methyl-2-oxopentanoate + CO2 + NADH. It participates in antifungal biosynthesis. In terms of biological role, isopropyl malate dehydrogenase; part of the gene cluster that mediates the de novo generation of L-homotyrosine from acetyl-CoA and 4-hydroxyphenyl-pyruvate. L-homotyrosine is a building block of echinocandin B, a fungal lipidated cyclic hexapeptide that acts as an antifungal agent. L-homotyrosine 4-hydroxyphenyl-pyruvate first undergoes an aldol-type condensation by htyA with the C-2 of acetyl-CoA followed by the release of CoA to form 2-(4-hydroxybenzyl)-malate. This is followed by isomerization of 2-(4-hydroxy-benzyl)-malate to 3-(4-hydroxybenzyl)-malate by htyD. Thereafter, 3-(4-hydroxybenzyl)-malate undergoes decarboxylation and oxidation to form 2-oxo-4-(4-hydroxybenzyl)butanoic acid, coupled to reduction of NAD(+) to NADH by htyC. The product then undergoes transamination catalyzed by htyB to form L-homotyrosine. In Aspergillus rugulosus (Emericella rugulosa), this protein is Isopropyl malate dehydrogenase htyC.